Reading from the N-terminus, the 163-residue chain is Phosphopantetheine adenylyltransferase (163 aa).

A substrate-binding site is contributed by serine 9. ATP is bound by residues 9–10 (SF) and histidine 17. Positions 41, 75, and 89 each coordinate substrate. ATP is bound by residues 90 to 92 (GIR), glutamate 100, and 125 to 131 (HLYVRSD).

The protein belongs to the bacterial CoaD family. In terms of assembly, homohexamer. Mg(2+) serves as cofactor.

Its subcellular location is the cytoplasm. The catalysed reaction is (R)-4'-phosphopantetheine + ATP + H(+) = 3'-dephospho-CoA + diphosphate. It participates in cofactor biosynthesis; coenzyme A biosynthesis; CoA from (R)-pantothenate: step 4/5. Functionally, reversibly transfers an adenylyl group from ATP to 4'-phosphopantetheine, yielding dephospho-CoA (dPCoA) and pyrophosphate. This Borreliella burgdorferi (strain ZS7) (Borrelia burgdorferi) protein is Phosphopantetheine adenylyltransferase.